Consider the following 126-residue polypeptide: Large-conductance mechanosensitive channel (126 aa).

The next 3 helical transmembrane spans lie at 14-34, 40-60, and 67-87; these read VIDL…VTSL, MPLL…FTFV, and GLFI…FLFI.

Belongs to the MscL family. In terms of assembly, homopentamer.

It localises to the cell membrane. Functionally, channel that opens in response to stretch forces in the membrane lipid bilayer. May participate in the regulation of osmotic pressure changes within the cell. This chain is Large-conductance mechanosensitive channel, found in Bacillus licheniformis (strain ATCC 14580 / DSM 13 / JCM 2505 / CCUG 7422 / NBRC 12200 / NCIMB 9375 / NCTC 10341 / NRRL NRS-1264 / Gibson 46).